We begin with the raw amino-acid sequence, 1124 residues long: PAN2-PAN3 deadenylation complex catalytic subunit PAN2 (1124 aa).

4 WD repeats span residues 19 to 58 (IDNS…IPMP), 118 to 157 (PGFN…TTSF), 158 to 195 (NHTG…TVKS), and 309 to 348 (SSNT…SKNF). The interval 351 to 484 (FPSYLEQPDF…EYKLSNKFEV (134 aa)) is linker. Residues 484–861 (VPNCYSNLKI…KPIIVMYQLA (378 aa)) enclose the USP domain. The region spanning 917-1091 (IAIDAEFVAL…EDANTALLLY (175 aa)) is the Exonuclease domain. The a divalent metal cation site is built by aspartate 920, glutamate 922, aspartate 1030, and aspartate 1083.

It belongs to the peptidase C19 family. PAN2 subfamily. Forms a heterotrimer with an asymmetric homodimer of the regulatory subunit PAN3 to form the poly(A)-nuclease (PAN) deadenylation complex. A divalent metal cation serves as cofactor.

It is found in the cytoplasm. The catalysed reaction is Exonucleolytic cleavage of poly(A) to 5'-AMP.. Its activity is regulated as follows. Positively regulated by the regulatory subunit PAN3. Catalytic subunit of the poly(A)-nuclease (PAN) deadenylation complex, one of two cytoplasmic mRNA deadenylases involved in mRNA turnover. PAN specifically shortens poly(A) tails of RNA and the activity is stimulated by poly(A)-binding protein PAB1. PAN deadenylation is followed by rapid degradation of the shortened mRNA tails by the CCR4-NOT complex. Deadenylated mRNAs are then degraded by two alternative mechanisms, namely exosome-mediated 3'-5' exonucleolytic degradation, or deadenylation-dependent mRNA decaping and subsequent 5'-3' exonucleolytic degradation by XRN1. May also be involved in post-transcriptional maturation of mRNA poly(A) tails. The protein is PAN2-PAN3 deadenylation complex catalytic subunit PAN2 of Debaryomyces hansenii (strain ATCC 36239 / CBS 767 / BCRC 21394 / JCM 1990 / NBRC 0083 / IGC 2968) (Yeast).